A 61-amino-acid chain; its full sequence is Putative antitoxin VapB21 (61 aa).

It belongs to the UPF0165 family.

Functionally, possibly the antitoxin component of a type II toxin-antitoxin (TA) system. Its cognate toxin is VapC21 (Potential). This chain is Putative antitoxin VapB21 (vapB21), found in Archaeoglobus fulgidus (strain ATCC 49558 / DSM 4304 / JCM 9628 / NBRC 100126 / VC-16).